A 128-amino-acid polypeptide reads, in one-letter code: Gene 64 protein (128 aa).

In Mycobacterium phage L5 (Mycobacteriophage L5), this protein is Gene 64 protein (64).